A 61-amino-acid chain; its full sequence is Small ribosomal subunit protein uS14B (61 aa).

Cysteine 24, cysteine 27, cysteine 40, and cysteine 43 together coordinate Zn(2+).

The protein belongs to the universal ribosomal protein uS14 family. Zinc-binding uS14 subfamily. Part of the 30S ribosomal subunit. Contacts proteins S3 and S10. Zn(2+) serves as cofactor.

Binds 16S rRNA, required for the assembly of 30S particles and may also be responsible for determining the conformation of the 16S rRNA at the A site. In Limosilactobacillus reuteri (strain DSM 20016) (Lactobacillus reuteri), this protein is Small ribosomal subunit protein uS14B.